We begin with the raw amino-acid sequence, 406 residues long: Argininosuccinate synthase (406 aa).

ATP-binding positions include 14–22 (AYSGGLDTS) and Ala41. L-citrulline is bound by residues Tyr92 and Ser97. Gly122 is an ATP binding site. Residues Thr124, Asn128, and Asp129 each coordinate L-aspartate. Asn128 is a binding site for L-citrulline. L-citrulline contacts are provided by Arg132, Ser181, Ser190, Glu266, and Tyr278.

Belongs to the argininosuccinate synthase family. Type 1 subfamily. As to quaternary structure, homotetramer.

Its subcellular location is the cytoplasm. It catalyses the reaction L-citrulline + L-aspartate + ATP = 2-(N(omega)-L-arginino)succinate + AMP + diphosphate + H(+). Its pathway is amino-acid biosynthesis; L-arginine biosynthesis; L-arginine from L-ornithine and carbamoyl phosphate: step 2/3. The polypeptide is Argininosuccinate synthase (Geobacter sulfurreducens (strain ATCC 51573 / DSM 12127 / PCA)).